The chain runs to 499 residues: 2,3-bisphosphoglycerate-independent phosphoglycerate mutase (499 aa).

The Mn(2+) site is built by Asp-10 and Ser-60. Ser-60 serves as the catalytic Phosphoserine intermediate. Substrate-binding positions include His-121, 151 to 152, Arg-182, Arg-188, 253 to 256, and Lys-326; these read RD and RPDR. Residues Asp-391, His-395, Asp-434, His-435, and His-452 each coordinate Mn(2+).

This sequence belongs to the BPG-independent phosphoglycerate mutase family. In terms of assembly, monomer. Mn(2+) serves as cofactor.

It carries out the reaction (2R)-2-phosphoglycerate = (2R)-3-phosphoglycerate. It functions in the pathway carbohydrate degradation; glycolysis; pyruvate from D-glyceraldehyde 3-phosphate: step 3/5. Its function is as follows. Catalyzes the interconversion of 2-phosphoglycerate and 3-phosphoglycerate. This Metamycoplasma hominis (strain ATCC 23114 / DSM 25592 / NBRC 14850 / NCTC 10111 / PG21) (Mycoplasma hominis) protein is 2,3-bisphosphoglycerate-independent phosphoglycerate mutase.